Consider the following 517-residue polypeptide: Ribose import ATP-binding protein RbsA 2 (517 aa).

ABC transporter domains follow at residues 11-251 (LEMR…VGRD) and 263-507 (YDPG…ALAT). Residue 43-50 (GENGAGKS) participates in ATP binding.

The protein belongs to the ABC transporter superfamily. Ribose importer (TC 3.A.1.2.1) family. As to quaternary structure, the complex is composed of an ATP-binding protein (RbsA), two transmembrane proteins (RbsC) and a solute-binding protein (RbsB).

Its subcellular location is the cell inner membrane. It catalyses the reaction D-ribose(out) + ATP + H2O = D-ribose(in) + ADP + phosphate + H(+). Part of the ABC transporter complex RbsABC involved in ribose import. Responsible for energy coupling to the transport system. This chain is Ribose import ATP-binding protein RbsA 2, found in Burkholderia pseudomallei (strain 1710b).